A 479-amino-acid chain; its full sequence is Ribosomal RNA small subunit methyltransferase F (479 aa).

S-adenosyl-L-methionine is bound by residues 125–131 (AAAPGSK), Glu149, Asp176, and Asp194. Cys247 serves as the catalytic Nucleophile.

This sequence belongs to the class I-like SAM-binding methyltransferase superfamily. RsmB/NOP family.

The protein localises to the cytoplasm. The enzyme catalyses cytidine(1407) in 16S rRNA + S-adenosyl-L-methionine = 5-methylcytidine(1407) in 16S rRNA + S-adenosyl-L-homocysteine + H(+). Its function is as follows. Specifically methylates the cytosine at position 1407 (m5C1407) of 16S rRNA. The chain is Ribosomal RNA small subunit methyltransferase F from Salmonella paratyphi B (strain ATCC BAA-1250 / SPB7).